The following is a 215-amino-acid chain: Cytochrome b6 (215 aa).

Residues Ile32 to Phe52 traverse the membrane as a helical segment. Residue Cys35 participates in heme c binding. The heme b site is built by His86 and His100. The next 3 helical transmembrane spans lie at Ala90–Phe110, Leu116–Tyr136, and Leu186–Ile206. His187 and His202 together coordinate heme b.

Belongs to the cytochrome b family. PetB subfamily. As to quaternary structure, the 4 large subunits of the cytochrome b6-f complex are cytochrome b6, subunit IV (17 kDa polypeptide, PetD), cytochrome f and the Rieske protein, while the 4 small subunits are PetG, PetL, PetM and PetN. The complex functions as a dimer. Requires heme b as cofactor. The cofactor is heme c.

It localises to the plastid. The protein resides in the chloroplast thylakoid membrane. Functionally, component of the cytochrome b6-f complex, which mediates electron transfer between photosystem II (PSII) and photosystem I (PSI), cyclic electron flow around PSI, and state transitions. In Phalaenopsis aphrodite subsp. formosana (Moth orchid), this protein is Cytochrome b6.